A 139-amino-acid polypeptide reads, in one-letter code: D-ribose pyranase (139 aa).

Residue H20 is the Proton donor of the active site. Substrate is bound by residues D28, H106, and 128 to 130 (YAN).

Belongs to the RbsD / FucU family. RbsD subfamily. Homodecamer.

The protein resides in the cytoplasm. It carries out the reaction beta-D-ribopyranose = beta-D-ribofuranose. The protein operates within carbohydrate metabolism; D-ribose degradation; D-ribose 5-phosphate from beta-D-ribopyranose: step 1/2. Functionally, catalyzes the interconversion of beta-pyran and beta-furan forms of D-ribose. The protein is D-ribose pyranase of Salmonella typhi.